The primary structure comprises 890 residues: Leucine--tRNA ligase (890 aa).

The 'HIGH' region signature appears at 48–58 (PYPSGKLHMGH). A 'KMSKS' region motif is present at residues 645–649 (KMSKS). Residue K648 coordinates ATP.

The protein belongs to the class-I aminoacyl-tRNA synthetase family.

Its subcellular location is the cytoplasm. The catalysed reaction is tRNA(Leu) + L-leucine + ATP = L-leucyl-tRNA(Leu) + AMP + diphosphate. In Polynucleobacter necessarius subsp. necessarius (strain STIR1), this protein is Leucine--tRNA ligase.